The chain runs to 551 residues: Calcium-dependent protein kinase 13 (551 aa).

Glycine 2 carries the N-myristoyl glycine lipid modification. The segment at 15 to 78 (SFKQTASQRH…APADLGSVLG (64 aa)) is disordered. The Protein kinase domain occupies 88 to 346 (YAMGRKLGQG…AHEVLCHPWI (259 aa)). Residues 94-102 (LGQGQFGTT) and lysine 117 each bind ATP. Aspartate 212 acts as the Proton acceptor in catalysis. The interval 352–382 (APDRPLDPAVLSRIKQFSAMNKLKKMALRVI) is autoinhibitory domain. EF-hand domains are found at residues 389–424 (EEIAGLKEMFQTMDADNSGAITYDELKEGLRKYGST), 425–460 (LKDTEIRDLMDAADIDNSGTIDYIEFIAATLHLNKL), 461–496 (EREEHLVAAFSYFDKDGSGYITVDELQQACKEHNMP), and 497–530 (DAFLDDVINEADQDNDGRIDYGEFVAMMTKGNMG). Residues aspartate 402, aspartate 404, serine 406, glutamate 413, aspartate 438, aspartate 440, serine 442, threonine 444, glutamate 449, aspartate 474, aspartate 476, serine 478, tyrosine 480, glutamate 485, aspartate 508, aspartate 510, aspartate 512, arginine 514, and glutamate 519 each coordinate Ca(2+).

The protein belongs to the protein kinase superfamily. Ser/Thr protein kinase family. CDPK subfamily. In terms of tissue distribution, expressed in vascular tissues of crowns and roots, vascular bundles and central cylinder. Expressed in roots, leaf blades, spikelets and developing seeds.

The protein resides in the membrane. The catalysed reaction is L-seryl-[protein] + ATP = O-phospho-L-seryl-[protein] + ADP + H(+). It carries out the reaction L-threonyl-[protein] + ATP = O-phospho-L-threonyl-[protein] + ADP + H(+). Its activity is regulated as follows. Activated by calcium. Autophosphorylation may play an important role in the regulation of the kinase activity. In terms of biological role, may play a role in signal transduction pathways that involve calcium as a second messenger. May function in signal transduction pathways that positively regulate responses to cold, salt and drought stresses. The chain is Calcium-dependent protein kinase 13 from Oryza sativa subsp. japonica (Rice).